The primary structure comprises 779 residues: Chloride channel protein CLC-c (779 aa).

Ser-27 is subject to Phosphoserine. Helical transmembrane passes span Thr-92–Leu-112, Phe-142–Ile-162, Ser-190–Gly-210, Met-215–Arg-235, Gly-257–Leu-277, Ala-287–Ile-307, Leu-341–Val-361, Ile-380–Leu-400, Leu-466–Pro-486, Gly-488–Leu-508, Ser-520–Val-540, and Ile-541–Ile-561. In terms of domain architecture, CBS 1 spans Asp-601–Gln-659. At Ser-672 the chain carries Phosphoserine. The CBS 2 domain maps to Ile-713–Pro-777. The helical transmembrane segment at His-741–His-761 threads the bilayer.

This sequence belongs to the chloride channel (TC 2.A.49) family. In terms of assembly, homodimer. Interacts with PP2A5. Broadly expressed in the plant.

Its subcellular location is the membrane. Voltage-gated chloride channel. The protein is Chloride channel protein CLC-c (CLC-C) of Arabidopsis thaliana (Mouse-ear cress).